We begin with the raw amino-acid sequence, 316 residues long: MSNAFRTVFPTVNRELLNWFPGHMGKGMKQMQQKLKQVDCVIEVHDARIPLSGRNSEFRYTISGVKPHILVLNKKDKIDRRLQGRVVDRLQQEDSEARHILFTNCKDQSCNGIRKVMPLAQDLILSSNRFNRADQKEYCIMIIGVPNVGKSSLINVLRNRHLNKKGASQVGAVAGITRSVLNKIKISEDPLVYLLDTPGILKPNIADTETGLRLALVSCLQDHLVGEELIADYLLYLLNKRGNFKYVELMGLKEPTDSIAEVLIAGSKHLDKTVRVRHYDGSFVIRPDAMLAARHMIKAFRTGAFGKILIDDDKFV.

The CP-type G domain maps to 28-203; it reads MKQMQQKLKQ…LLDTPGILKP (176 aa). Residues 73 to 76, 147 to 152, and G199 contribute to the GTP site; these read NKKD and NVGKSS.

Belongs to the TRAFAC class YlqF/YawG GTPase family. MTG1 subfamily.

Its subcellular location is the mitochondrion inner membrane. Plays a role in the regulation of the mitochondrial ribosome assembly and of translational activity. Displays mitochondrial GTPase activity. The chain is Mitochondrial GTPase 1 from Aedes aegypti (Yellowfever mosquito).